A 499-amino-acid polypeptide reads, in one-letter code: UPF0159 protein Ta1429 (499 aa).

ThyX domains follow at residues 1-246 (MIDR…ALSQ) and 271-476 (EKVR…IKFV).

The protein belongs to the UPF0159 family.

In Thermoplasma acidophilum (strain ATCC 25905 / DSM 1728 / JCM 9062 / NBRC 15155 / AMRC-C165), this protein is UPF0159 protein Ta1429.